Consider the following 140-residue polypeptide: Large ribosomal subunit protein uL16 (140 aa).

This sequence belongs to the universal ribosomal protein uL16 family. Part of the 50S ribosomal subunit.

Functionally, binds 23S rRNA and is also seen to make contacts with the A and possibly P site tRNAs. This chain is Large ribosomal subunit protein uL16, found in Trichlorobacter lovleyi (strain ATCC BAA-1151 / DSM 17278 / SZ) (Geobacter lovleyi).